Reading from the N-terminus, the 634-residue chain is DNA mismatch repair protein MutL (634 aa).

A disordered region spans residues 406–427; the sequence is HTHHNDTKGSVHTKSFSARSSS.

It belongs to the DNA mismatch repair MutL/HexB family.

Functionally, this protein is involved in the repair of mismatches in DNA. It is required for dam-dependent methyl-directed DNA mismatch repair. May act as a 'molecular matchmaker', a protein that promotes the formation of a stable complex between two or more DNA-binding proteins in an ATP-dependent manner without itself being part of a final effector complex. The sequence is that of DNA mismatch repair protein MutL from Anaplasma phagocytophilum (strain HZ).